The chain runs to 388 residues: Reducing end xylose-releasing exo-oligoxylanase (388 aa).

Residue E70 is the Proton donor of the active site. D263 functions as the Proton acceptor in the catalytic mechanism.

Belongs to the glycosyl hydrolase 8 (cellulase D) family.

It carries out the reaction Hydrolysis of (1-&gt;4)-beta-D-xylose residues from the reducing end of oligosaccharides.. Its function is as follows. Hydrolyzes xylooligosaccharides with a degree of polymerization of greater than or equal to 3, releasing xylose from the reducing end. Only hydrolyzes the beta anomers of xylooligosaccharides, with inversion of anomeric configuration. Hydrolyzes the glucose and xylose-based trisaccharides where xylose is located at the -1 subsite, GXX, XXG and GXG. Does not hydrolyze xylan, chitosan, lichenan, curdlan or carboxymethylcellulose. In Halalkalibacterium halodurans (strain ATCC BAA-125 / DSM 18197 / FERM 7344 / JCM 9153 / C-125) (Bacillus halodurans), this protein is Reducing end xylose-releasing exo-oligoxylanase.